The chain runs to 408 residues: MRAKISSQAAVAIFLALVTCCLGTVIKGLGVSGVFEDTLVVFEKVETEDVGARLVFLGDQRPKNPYGGTVRVLFQPGESGTCSIPLLQVRYSNCTNTSAAVFSGCYRTDTEFSVPRANRGTSPGFVSLRTPTMLDSGDIYVTVHLDHLPRPDAFRIKFVSLYTGNETVRISTKDRAGRDRDSYGGASSPVGGRDSNRRTASRNDDGDLPLALYGPCRPCGKNCKNLREYLLTEESWHEWTSVFAPTTVAPTTTVATTAMRSTTVSFATMTAEVITSTGTVSMEPHNTTTADMVNLTAADPPPSEPVPALNALAIGLVVGGTVASLVFLSVILGGLISCCARRRSARRLLTRSNSAREMEDLAPSSEDARTSRMSPDVVELSELVNGAPLSHRNDIGGDDLTSISSASG.

An N-terminal signal peptide occupies residues 1 to 23; the sequence is MRAKISSQAAVAIFLALVTCCLG. The Virion surface portion of the chain corresponds to 24–311; sequence TVIKGLGVSG…PSEPVPALNA (288 aa). Asparagine 93, asparagine 96, and asparagine 165 each carry an N-linked (GlcNAc...) asparagine; by host glycan. Composition is skewed to basic and acidic residues over residues 172–182 and 194–205; these read TKDRAGRDRDS and DSNRRTASRNDD. Positions 172-207 are disordered; the sequence is TKDRAGRDRDSYGGASSPVGGRDSNRRTASRNDDGD. 2 N-linked (GlcNAc...) asparagine; by host glycosylation sites follow: asparagine 286 and asparagine 294. Residues 312–332 form a helical membrane-spanning segment; that stretch reads LAIGLVVGGTVASLVFLSVIL. Topologically, residues 333 to 408 are intravirion; the sequence is GGLISCCARR…DLTSISSASG (76 aa). 2 disordered regions span residues 357–376 and 388–408; these read EMED…MSPD and PLSH…SASG.

This sequence belongs to the alphaherpesvirinae glycoprotein I family. In terms of assembly, interacts with gE.

It is found in the virion membrane. The protein localises to the host cell membrane. Its subcellular location is the host cell junction. It localises to the host Golgi apparatus membrane. Its function is as follows. In epithelial cells, the heterodimer gE/gI is required for the cell-to-cell spread of the virus, by sorting nascent virions to cell junctions. Once the virus reaches the cell junctions, virus particles can spread to adjacent cells extremely rapidly through interactions with cellular receptors that accumulate at these junctions. Implicated in basolateral spread in polarized cells. In neuronal cells, gE/gI is essential for the anterograde spread of the infection throughout the host nervous system. Together with US9, the heterodimer gE/gI is involved in the sorting and transport of viral structural components toward axon tips. This Psittacid herpesvirus 1 (isolate Amazon parrot/-/97-0001/1997) (PsHV-1) protein is Envelope glycoprotein I (gI).